The primary structure comprises 177 residues: Large ribosomal subunit protein uL6 (177 aa).

It belongs to the universal ribosomal protein uL6 family. As to quaternary structure, part of the 50S ribosomal subunit.

In terms of biological role, this protein binds to the 23S rRNA, and is important in its secondary structure. It is located near the subunit interface in the base of the L7/L12 stalk, and near the tRNA binding site of the peptidyltransferase center. The protein is Large ribosomal subunit protein uL6 of Laribacter hongkongensis (strain HLHK9).